Consider the following 890-residue polypeptide: DNA mismatch repair protein MutS (890 aa).

Position 634–641 (634–641) interacts with ATP; sequence GPNMGGKS.

Belongs to the DNA mismatch repair MutS family.

Functionally, this protein is involved in the repair of mismatches in DNA. It is possible that it carries out the mismatch recognition step. This protein has a weak ATPase activity. This chain is DNA mismatch repair protein MutS, found in Burkholderia pseudomallei (strain 1710b).